Reading from the N-terminus, the 63-residue chain is Conotoxin Cal12.5 (63 aa).

An N-terminal signal peptide occupies residues 1–21 (MKVTCVLVVLLLLLPYGDLLG).

This sequence belongs to the conotoxin O1 superfamily. Post-translationally, contains 4 disulfide bonds. In terms of tissue distribution, expressed by the venom duct.

The protein resides in the secreted. Probable neurotoxin. The protein is Conotoxin Cal12.5 of Californiconus californicus (California cone).